The primary structure comprises 346 residues: GTPase Obg (346 aa).

Residues 1-158 enclose the Obg domain; it reads MFVDECVVKL…GTYRLVLKSI (158 aa). In terms of domain architecture, OBG-type G spans 159-332; that stretch reads ADVGLVGFPN…LKKELLKRVT (174 aa). GTP-binding positions include 165–172, 190–194, 216–219, 286–289, and 313–315; these read GFPNAGKS, FTTLH, DVPG, NKMD, and SCL. Mg(2+)-binding residues include serine 172 and threonine 192.

Belongs to the TRAFAC class OBG-HflX-like GTPase superfamily. OBG GTPase family. As to quaternary structure, monomer. Mg(2+) serves as cofactor.

The protein localises to the cytoplasm. An essential GTPase which binds GTP, GDP and possibly (p)ppGpp with moderate affinity, with high nucleotide exchange rates and a fairly low GTP hydrolysis rate. Plays a role in control of the cell cycle, stress response, ribosome biogenesis and in those bacteria that undergo differentiation, in morphogenesis control. This chain is GTPase Obg, found in Opitutus terrae (strain DSM 11246 / JCM 15787 / PB90-1).